We begin with the raw amino-acid sequence, 383 residues long: N-acetyldiaminopimelate deacetylase (383 aa).

Asp-72 is a catalytic residue. Glu-131 acts as the Proton acceptor in catalysis.

The protein belongs to the peptidase M20A family. N-acetyldiaminopimelate deacetylase subfamily.

The catalysed reaction is N-acetyl-(2S,6S)-2,6-diaminopimelate + H2O = (2S,6S)-2,6-diaminopimelate + acetate. It functions in the pathway amino-acid biosynthesis; L-lysine biosynthesis via DAP pathway; LL-2,6-diaminopimelate from (S)-tetrahydrodipicolinate (acetylase route): step 3/3. Its function is as follows. Catalyzes the conversion of N-acetyl-diaminopimelate to diaminopimelate and acetate. The sequence is that of N-acetyldiaminopimelate deacetylase from Lacticaseibacillus paracasei (strain ATCC 334 / BCRC 17002 / CCUG 31169 / CIP 107868 / KCTC 3260 / NRRL B-441) (Lactobacillus paracasei).